Reading from the N-terminus, the 782-residue chain is Protein phosphatase 1 regulatory subunit 12C (782 aa).

The segment covering 1-17 has biased composition (low complexity); it reads MSGEDGPAAGPGAAAAA. Positions 1-43 are disordered; sequence MSGEDGPAAGPGAAAAAARERRREQLRQWGARAGAEPGPGERR. The residue at position 2 (Ser2) is an N-acetylserine. ANK repeat units lie at residues 100–129, 133–162, 226–255, and 259–288; these read DGIS…TVNQ, EGWT…NIAA, TGAS…DPEL, and DGWT…GMDS. Residues 297-329 are a coiled coil; it reads CDLADEEVLSLLEELARKQEDLRNQKEASQSRG. A disordered region spans residues 316 to 686; the sequence is EDLRNQKEAS…EEPDGGFRTL (371 aa). Positions 323 to 337 are enriched in polar residues; the sequence is EASQSRGQEPQAPSS. The span at 349–365 shows a compositional bias: basic and acidic residues; the sequence is SSREKISLQDLSKERRP. The span at 374–383 shows a compositional bias: acidic residues; the sequence is QDEDEGEEGP. 5 positions are modified to phosphoserine: Ser399, Ser407, Ser427, Ser452, and Ser509. Residues 449 to 463 are compositionally biased toward polar residues; sequence RSASSSWLEGTSTQA. The span at 537–546 shows a compositional bias: basic and acidic residues; that stretch reads VRDEESESQR. The span at 547 to 557 shows a compositional bias: basic residues; it reads KARSRLMRQSR. Thr560 is subject to Phosphothreonine; by CDC42BP and ROCK2. The segment covering 567–583 has biased composition (basic and acidic residues); the sequence is DLKEAEKAAGKAPESEK. Phosphoserine is present on residues Ser604 and Ser647. Residues 670–680 show a composition bias toward acidic residues; that stretch reads PEPEPESEEPD. A coiled-coil region spans residues 681–782; that stretch reads GGFRTLYAEL…LIRVISKLSK (102 aa).

As to quaternary structure, PP1 comprises a catalytic subunit, PPP1CA, PPP1CB or PPP1CC, and one or several targeting or regulatory subunits. PPP1R12C mediates binding to myosin. Interacts via its N-terminus with PPP1CB. Interacts with IL16. Interacts with the coiled-coil domain of MPRIP. Interacts with NOD2. Phosphorylation at Thr-560 is essential for its interaction with PPP1CB. Ubiquitously expressed. Highly expressed in heart.

The protein resides in the cytoplasm. It is found in the cytoskeleton. Its subcellular location is the stress fiber. In terms of biological role, regulates myosin phosphatase activity. The polypeptide is Protein phosphatase 1 regulatory subunit 12C (Homo sapiens (Human)).